Reading from the N-terminus, the 1242-residue chain is Receptor-type adenylate cyclase GRESAG 4.1 (1242 aa).

Topologically, residues 1–39 (MHWQEGGGRGCVYTHGNCRRNLTARALQALQHVEALTCH) are cytoplasmic. Residues 40–60 (YCVSLLHLLPLLLMWMPPVCA) form a helical membrane-spanning segment. Topologically, residues 61–862 (DDSAVTVNVL…THTVTDSWNN (802 aa)) are extracellular. Residues asparagine 116, asparagine 289, asparagine 318, asparagine 338, asparagine 401, asparagine 534, asparagine 563, asparagine 603, asparagine 702, asparagine 741, and asparagine 818 are each glycosylated (N-linked (GlcNAc...) asparagine). Residues 863 to 883 (FWVCIRLVIIYCPWCVPTHLP) form a helical membrane-spanning segment. The Cytoplasmic segment spans residues 884–1242 (AERRNNNRAP…PFYDMHLQEY (359 aa)). The region spanning 901 to 1056 (TLIFTDIESS…RTPNMAARTE (156 aa)) is the Guanylate cyclase domain. Mg(2+)-binding residues include aspartate 906 and aspartate 949.

This sequence belongs to the adenylyl cyclase class-3 family. Mg(2+) is required as a cofactor.

The protein localises to the membrane. It carries out the reaction ATP = 3',5'-cyclic AMP + diphosphate. Functionally, could act as a receptor for an unknown ligand. This chain is Receptor-type adenylate cyclase GRESAG 4.1 (GRESAG 4.1), found in Trypanosoma brucei brucei.